A 1850-amino-acid chain; its full sequence is Vitellogenin-2 (1850 aa).

Positions 1-15 (MRGIILALVLTLVGS) are cleaved as a signal peptide. Positions 24 to 662 (FNSRRSYLYN…SPRTMFPSAI (639 aa)) constitute a Vitellogenin domain. The N-linked (GlcNAc...) asparagine glycan is linked to N604. Residues 935 to 984 (DAPLDVTEEPFQTSERASREHFAMQGPDSMPRKQSHSSREDLRRSTGKRA) form a disordered region. An N-linked (GlcNAc...) asparagine glycan is attached at N1094. Disordered regions lie at residues 1115–1313 (GTEP…SSSS) and 1338–1362 (EFPK…SHDT). Over residues 1122–1143 (TSSSSSSASSTATSSSSSSASS) the composition is skewed to low complexity. The span at 1156 to 1165 (DQVKQARNKD) shows a compositional bias: basic and acidic residues. Over residues 1167–1266 (SSSSRSSKSS…SRSSSSSSKS (100 aa)) the composition is skewed to low complexity. 2 N-linked (GlcNAc...) asparagine glycosylation sites follow: N1177 and N1188. Over residues 1267-1277 (SSHHSHSHHSG) the composition is skewed to basic residues. The segment covering 1278–1291 (HLNGSSSSSSSSRS) has biased composition (low complexity). The N-linked (GlcNAc...) asparagine glycan is linked to N1280. Basic and acidic residues predominate over residues 1338 to 1350 (EFPKRKLPGDRAT). 3 N-linked (GlcNAc...) asparagine glycosylation sites follow: N1417, N1597, and N1665. In terms of domain architecture, VWFD spans 1579-1756 (ARCSVSYNKI…SWILEEAPCR (178 aa)). 2 disulfides stabilise this stretch: C1581-C1719 and C1604-C1755.

Phosvitin, an egg yolk storage protein, is one of the most highly phosphorylated (10%) proteins in nature. In terms of processing, cathepsin D is responsible for intraoocytic processing of vitellogenin. Post-translationally, may contain intrachain disulfide bonds. In terms of tissue distribution, after incorporation from serum via a specific receptor, it is cleaved into four fragments, heavy and light chain lipovitellins, phosphovitin and YGP40, and YGP40 is released into the yolk plasma before or during compartmentation of lipovitellin-phosvitin complex into the yolk granule.

In terms of biological role, precursor of the major egg-yolk proteins that are sources of nutrients during early development of oviparous organisms. Its function is as follows. Phosvitin is believed to be of importance in sequestering calcium, iron and other cations for the developing embryo. The sequence is that of Vitellogenin-2 (VTG2) from Gallus gallus (Chicken).